The sequence spans 216 residues: Urease operon 23 kDa accessory protein (216 aa).

Functionally, involved in the expression of hydrogenase activity. May be a regulatory gene affecting the expression of the hydrogenase operon or could be involved in the process of nickel incorporation into the hydrogenase apoenzyme. This is Urease operon 23 kDa accessory protein from Rhizobium meliloti (strain 1021) (Ensifer meliloti).